Reading from the N-terminus, the 450-residue chain is Phosphoglucosamine mutase (450 aa).

The active-site Phosphoserine intermediate is the S101. Mg(2+) contacts are provided by S101, D240, D242, and D244. Position 101 is a phosphoserine (S101).

It belongs to the phosphohexose mutase family. Requires Mg(2+) as cofactor. Activated by phosphorylation.

It carries out the reaction alpha-D-glucosamine 1-phosphate = D-glucosamine 6-phosphate. Catalyzes the conversion of glucosamine-6-phosphate to glucosamine-1-phosphate. In Streptococcus agalactiae serotype Ia (strain ATCC 27591 / A909 / CDC SS700), this protein is Phosphoglucosamine mutase.